The chain runs to 530 residues: Bifunctional purine biosynthesis protein PurH (530 aa).

The MGS-like domain maps to 1–148 (MNNARPIRRA…KNHKDVTIVV (148 aa)).

The protein belongs to the PurH family.

The catalysed reaction is (6R)-10-formyltetrahydrofolate + 5-amino-1-(5-phospho-beta-D-ribosyl)imidazole-4-carboxamide = 5-formamido-1-(5-phospho-D-ribosyl)imidazole-4-carboxamide + (6S)-5,6,7,8-tetrahydrofolate. It carries out the reaction IMP + H2O = 5-formamido-1-(5-phospho-D-ribosyl)imidazole-4-carboxamide. It participates in purine metabolism; IMP biosynthesis via de novo pathway; 5-formamido-1-(5-phospho-D-ribosyl)imidazole-4-carboxamide from 5-amino-1-(5-phospho-D-ribosyl)imidazole-4-carboxamide (10-formyl THF route): step 1/1. The protein operates within purine metabolism; IMP biosynthesis via de novo pathway; IMP from 5-formamido-1-(5-phospho-D-ribosyl)imidazole-4-carboxamide: step 1/1. This is Bifunctional purine biosynthesis protein PurH from Vibrio vulnificus (strain YJ016).